A 426-amino-acid polypeptide reads, in one-letter code: Histidine--tRNA ligase (426 aa).

The protein belongs to the class-II aminoacyl-tRNA synthetase family. Homodimer.

Its subcellular location is the cytoplasm. It catalyses the reaction tRNA(His) + L-histidine + ATP = L-histidyl-tRNA(His) + AMP + diphosphate + H(+). In Streptococcus pyogenes serotype M28 (strain MGAS6180), this protein is Histidine--tRNA ligase.